The following is a 513-amino-acid chain: ATP synthase subunit alpha (513 aa).

169 to 176 (GDRQTGKT) contacts ATP.

It belongs to the ATPase alpha/beta chains family. In terms of assembly, F-type ATPases have 2 components, CF(1) - the catalytic core - and CF(0) - the membrane proton channel. CF(1) has five subunits: alpha(3), beta(3), gamma(1), delta(1), epsilon(1). CF(0) has three main subunits: a(1), b(2) and c(9-12). The alpha and beta chains form an alternating ring which encloses part of the gamma chain. CF(1) is attached to CF(0) by a central stalk formed by the gamma and epsilon chains, while a peripheral stalk is formed by the delta and b chains.

Its subcellular location is the cell inner membrane. The enzyme catalyses ATP + H2O + 4 H(+)(in) = ADP + phosphate + 5 H(+)(out). Functionally, produces ATP from ADP in the presence of a proton gradient across the membrane. The alpha chain is a regulatory subunit. The chain is ATP synthase subunit alpha from Salmonella arizonae (strain ATCC BAA-731 / CDC346-86 / RSK2980).